Reading from the N-terminus, the 266-residue chain is Mediator of RNA polymerase II transcription subunit 18 (266 aa).

Belongs to the Mediator complex subunit 18 family. As to quaternary structure, component of the Mediator complex.

It localises to the nucleus. Its function is as follows. Component of the Mediator complex, a coactivator involved in the regulated transcription of nearly all RNA polymerase II-dependent genes. Mediator functions as a bridge to convey information from gene-specific regulatory proteins to the basal RNA polymerase II transcription machinery. Mediator is recruited to promoters by direct interactions with regulatory proteins and serves as a scaffold for the assembly of a functional preinitiation complex with RNA polymerase II and the general transcription factors. The polypeptide is Mediator of RNA polymerase II transcription subunit 18 (SRB5) (Candida glabrata (strain ATCC 2001 / BCRC 20586 / JCM 3761 / NBRC 0622 / NRRL Y-65 / CBS 138) (Yeast)).